The primary structure comprises 267 residues: MAASTMALSSSTFAGKAVKLSPSSSEISGNGRITMRKTAAKPKPASSGSPWXXXXXXXXXXXXXXXXXXXXXXXXXXXXXXXXXXXXXXXXXXXXXXXXXXXXXXXXXXXXXXXXXXXXXXXXXXXXXXXXXXXXXXXXXXXXXXXXXXXXSLVHAQSILAIWACQVVLMGAVEGYRIAGGPLGEVVDPLYPGGSFDPLGLAEDPEAFAELKVKEIKNGRLAMFSMFGFFVQAIVTGKGPLENLADHIADPVNNNAWAFATNFVPGK.

The N-terminal 34 residues, Met1–Thr34, are a transit peptide targeting the chloroplast. Positions Lys19–Xaa52 are disordered. A helical transmembrane segment spans residues Leu153 to Val173. The chlorophyll b site is built by Val154, Ser158, Gln166, Glu174, Arg177, and Leu183. Lys214, Glu215, Asn218, Arg220, Gln232, His247, and Ala256 together coordinate chlorophyll a. A helical transmembrane segment spans residues Leu221–Leu241. Phe263 is a binding site for chlorophyll b.

This sequence belongs to the light-harvesting chlorophyll a/b-binding (LHC) protein family. As to quaternary structure, the LHC complex consists of chlorophyll a-b binding proteins. Requires Binds at least 14 chlorophylls (8 Chl-a and 6 Chl-b) and carotenoids such as lutein and neoxanthin. as cofactor. In terms of processing, photoregulated by reversible phosphorylation of its threonine residues.

The protein resides in the plastid. It is found in the chloroplast thylakoid membrane. Its function is as follows. The light-harvesting complex (LHC) functions as a light receptor, it captures and delivers excitation energy to photosystems with which it is closely associated. This is Chlorophyll a-b binding protein 3B, chloroplastic (CAB3B) from Solanum lycopersicum (Tomato).